A 100-amino-acid polypeptide reads, in one-letter code: Urease subunit gamma (100 aa).

It belongs to the urease gamma subunit family. As to quaternary structure, heterotrimer of UreA (gamma), UreB (beta) and UreC (alpha) subunits. Three heterotrimers associate to form the active enzyme.

The protein localises to the cytoplasm. The catalysed reaction is urea + 2 H2O + H(+) = hydrogencarbonate + 2 NH4(+). Its pathway is nitrogen metabolism; urea degradation; CO(2) and NH(3) from urea (urease route): step 1/1. The chain is Urease subunit gamma from Magnetococcus marinus (strain ATCC BAA-1437 / JCM 17883 / MC-1).